A 267-amino-acid chain; its full sequence is Undecaprenyl-diphosphatase (267 aa).

7 consecutive transmembrane segments (helical) span residues 1–21, 40–60, 85–105, 111–131, 190–210, 219–239, and 245–265; these read MSLF…FLPV, GQVI…LYFW, LAMG…ALHF, ALRS…LLWW, MLMS…DVAV, DGAI…SLMM, and VSFT…LGIA.

Belongs to the UppP family.

It is found in the cell inner membrane. It catalyses the reaction di-trans,octa-cis-undecaprenyl diphosphate + H2O = di-trans,octa-cis-undecaprenyl phosphate + phosphate + H(+). Its function is as follows. Catalyzes the dephosphorylation of undecaprenyl diphosphate (UPP). Confers resistance to bacitracin. This is Undecaprenyl-diphosphatase from Ruegeria pomeroyi (strain ATCC 700808 / DSM 15171 / DSS-3) (Silicibacter pomeroyi).